Reading from the N-terminus, the 394-residue chain is Small ribosomal subunit protein mS79 (rPPR3b) (394 aa).

Residues 1–24 (MSSLSRFLLRGNFSFSTHTNRRFF) constitute a mitochondrion transit peptide. PPR repeat units lie at residues 105–139 (KEGFVARIINLYGRVGMFENAQKVFDEMPERNCKR), 140–170 (TALSFNALLNACVNSKKFDLVEGIFKELPGK), 176–210 (DVASYNTLIKGLCGKGSFTEAVALIDEIENKGLKP), 211–245 (DHITFNILLHESYTKGKFEEGEQIWARMVEKNVKR), 246–280 (DIRSYNARLLGLAMENKSEEMVSLFDKLKGNELKP), 281–315 (DVFTFTAMIKGFVSEGKLDEAITWYKEIEKNGCRP), 316–350 (LKFVFNSLLPAICKAGDLESAYELCKEIFAKRLLV), and 351–385 (DEAVLQEVVDALVKGSKQDEAEEIVELAKTNDYLQ).

The protein belongs to the PPR family. P subfamily. In terms of assembly, component of the mitochondrial ribosome small subunit.

It localises to the mitochondrion. In Arabidopsis thaliana (Mouse-ear cress), this protein is Small ribosomal subunit protein mS79 (rPPR3b).